The primary structure comprises 271 residues: MTTAGVSRRPGRLAGKAAIVTGAAGGIGRATVEAYLREGASVVAMDLAPRLAATRYEEPGAIPIACDLADRAAIDAAMADAVARLGGLDILVAGGALKGGTGNFLDLSDADWDRYVDVNMTGTFLTCRAGARAMVAAGAGKDGRSARIITIGSVNSFMAEPEAAAYVAAKGGVAMLTRAMAVDLARHGILVNMIAPGPVDVTGNNTGYSEPRLAEQVLDEVALGRPGLPEEVATAAVFLAEDGSSFITGSTITIDGGLSAMIFGGMREGRR.

Residue 20 to 44 coordinates NAD(+); the sequence is VTGAAGGIGRATVEAYLREGASVVA. Residue Ser-153 coordinates substrate. The active-site Proton acceptor is the Tyr-166.

It belongs to the short-chain dehydrogenases/reductases (SDR) family.

The enzyme catalyses an N-acyl-D-mannosamine + NAD(+) = an N-acyl-D-mannosaminolactone + NADH + H(+). In terms of biological role, acts on acetyl-D-mannosamine and glycolyl-D-mannosamine. In Flavobacterium sp. (strain 141-8), this protein is N-acylmannosamine 1-dehydrogenase.